The chain runs to 224 residues: Cytidylate kinase (224 aa).

13–21 serves as a coordination point for ATP; that stretch reads GPSASGKGT.

This sequence belongs to the cytidylate kinase family. Type 1 subfamily.

Its subcellular location is the cytoplasm. It carries out the reaction CMP + ATP = CDP + ADP. The catalysed reaction is dCMP + ATP = dCDP + ADP. This chain is Cytidylate kinase, found in Nitrosomonas eutropha (strain DSM 101675 / C91 / Nm57).